The primary structure comprises 201 residues: Rac-like GTP-binding protein ARAC2 (201 aa).

13-20 is a GTP binding site; the sequence is GDGAVGKT. The short motif at 35–43 is the Effector region element; it reads YVPTVFDNF. GTP is bound by residues 60-64 and 118-121; these read DTAGQ and TKLD. Cys198 carries the cysteine methyl ester modification. Residue Cys198 is the site of S-geranylgeranyl cysteine attachment. Residues 199 to 201 constitute a propeptide, removed in mature form; it reads FFL.

The protein belongs to the small GTPase superfamily. Rho family. Expressed exclusively in the root, hypocotyl and stem.

Its subcellular location is the cytoplasm. It is found in the membrane. In terms of biological role, inactive GDP-bound Rho GTPases reside in the cytosol, are found in a complex with Rho GDP-dissociation inhibitors (Rho GDIs), and are released from the GDI protein in order to translocate to membranes upon activation. The sequence is that of Rac-like GTP-binding protein ARAC2 (ARAC2) from Arabidopsis thaliana (Mouse-ear cress).